Reading from the N-terminus, the 298-residue chain is Probable 2-(5''-triphosphoribosyl)-3'-dephosphocoenzyme-A synthase 2 (298 aa).

The protein belongs to the CitG/MdcB family.

The enzyme catalyses 3'-dephospho-CoA + ATP = 2'-(5''-triphospho-alpha-D-ribosyl)-3'-dephospho-CoA + adenine. This is Probable 2-(5''-triphosphoribosyl)-3'-dephosphocoenzyme-A synthase 2 from Salmonella paratyphi A (strain ATCC 9150 / SARB42).